The following is a 311-amino-acid chain: Pyrimidine-specific ribonucleoside hydrolase RihA (311 aa).

The active site involves histidine 240.

This sequence belongs to the IUNH family. RihA subfamily.

Functionally, hydrolyzes with equal efficiency cytidine or uridine to ribose and cytosine or uracil, respectively. The polypeptide is Pyrimidine-specific ribonucleoside hydrolase RihA (Escherichia coli O127:H6 (strain E2348/69 / EPEC)).